A 286-amino-acid polypeptide reads, in one-letter code: 4-hydroxybenzoate octaprenyltransferase (286 aa).

Helical transmembrane passes span 20-40 (IGTLLLMWPCLMALVLAAGGM), 43-63 (LKVLVIFIIGVVVMRACGCII), 96-116 (LFVVMGLIAFGLVLMLNPLVV), 142-162 (FLGVVWSWSIPMAYAAQTGTV), 167-187 (WWLFAANWCWTVAYDTMYAMV), 210-230 (QVIALFQLAALACFIIAGWAA), and 234-254 (LVYALGIITFVGFSLYQQKLI).

The protein belongs to the UbiA prenyltransferase family. Mg(2+) serves as cofactor.

The protein localises to the cell inner membrane. The enzyme catalyses all-trans-octaprenyl diphosphate + 4-hydroxybenzoate = 4-hydroxy-3-(all-trans-octaprenyl)benzoate + diphosphate. The protein operates within cofactor biosynthesis; ubiquinone biosynthesis. Functionally, catalyzes the prenylation of para-hydroxybenzoate (PHB) with an all-trans polyprenyl group. Mediates the second step in the final reaction sequence of ubiquinone-8 (UQ-8) biosynthesis, which is the condensation of the polyisoprenoid side chain with PHB, generating the first membrane-bound Q intermediate 3-octaprenyl-4-hydroxybenzoate. This is 4-hydroxybenzoate octaprenyltransferase from Shewanella woodyi (strain ATCC 51908 / MS32).